A 1013-amino-acid chain; its full sequence is Protein HIRA (1013 aa).

WD repeat units lie at residues 11-53 (HNGK…KEED), 68-107 (NHLA…GPST), 129-168 (SHSG…EIIS), 172-211 (GHSG…LETS), 220-263 (GGTT…TNMD), 266-322 (GHRK…PLVV), and 326-367 (LFDK…DPLS). A disordered region spans residues 529–648 (AEETANKESG…GRPRKESQRL (120 aa)). Over residues 535–553 (KESGNVSSSSPVAPTSITA) the composition is skewed to polar residues. The span at 558–572 (EPMKALDSRFTERSK) shows a compositional bias: basic and acidic residues. Over residues 573-587 (ATSGTAGVAHLNQTA) the composition is skewed to polar residues. 2 stretches are compositionally biased toward basic and acidic residues: residues 589 to 604 (DRLK…KPRV) and 624 to 634 (RKGEADADLAE).

This sequence belongs to the WD repeat HIR1 family. Interacts with histone H2A, histone H2B, histone H3 and histone H4.

The protein localises to the nucleus. Its function is as follows. Required for the periodic repression of histone gene transcription during the cell cycle. Required for replication-independent chromatin assembly. This chain is Protein HIRA (hira), found in Xenopus laevis (African clawed frog).